The following is a 494-amino-acid chain: Glycerol kinase (494 aa).

Position 13 (T13) interacts with ADP. ATP contacts are provided by T13, T14, and S15. Residue T13 participates in sn-glycerol 3-phosphate binding. ADP is bound at residue R17. Sn-glycerol 3-phosphate-binding residues include R83, E84, Y135, and D244. Glycerol is bound by residues R83, E84, Y135, D244, and Q245. Positions 266 and 309 each coordinate ADP. 4 residues coordinate ATP: T266, G309, Q313, and G410. ADP is bound by residues G410 and N414.

The protein belongs to the FGGY kinase family.

It carries out the reaction glycerol + ATP = sn-glycerol 3-phosphate + ADP + H(+). Its pathway is polyol metabolism; glycerol degradation via glycerol kinase pathway; sn-glycerol 3-phosphate from glycerol: step 1/1. Its activity is regulated as follows. Inhibited by fructose 1,6-bisphosphate (FBP). In terms of biological role, key enzyme in the regulation of glycerol uptake and metabolism. Catalyzes the phosphorylation of glycerol to yield sn-glycerol 3-phosphate. The protein is Glycerol kinase of Shewanella sp. (strain ANA-3).